The following is a 910-amino-acid chain: Disease resistance protein RPH8A (910 aa).

A coiled-coil region spans residues 15–57 (DLLSRESERLQGIDEQLDGLKRQLRSLQSLLKDADAKKHGSDR). The region spanning 146 to 459 (RQRVQREIRQ…AEGIYDGSTI (314 aa)) is the NB-ARC domain. ATP is bound at residue 192 to 199 (GMGGIGKT).

The protein belongs to the disease resistance NB-LRR family. RPP8/HRT subfamily.

Its function is as follows. Disease resistance protein. Resistance proteins guard the plant against pathogens that contain an appropriate avirulence protein via an indirect interaction with this avirulence protein. That triggers a defense system including the hypersensitive response, which restricts the pathogen growth. In contrast to RPP8, it does not specifically recognize the Emco5 avirulence protein from Hyaloperonospora parasitica. This is Disease resistance protein RPH8A (RPH8A) from Arabidopsis thaliana (Mouse-ear cress).